The chain runs to 480 residues: Oxysterol-binding protein-related protein 2 (480 aa).

The tract at residues 1–60 (MNGEEEFFDAVTGFDSDNSSGEFSEANQKVTGMIDLDTSKNNRIGKTGERPSQENGIQKH) is disordered. Residues 15–30 (DSDNSSGEFSEANQKV) show a composition bias toward polar residues. 2 positions are modified to phosphoserine: Ser19 and Ser20. A 1,2-diacyl-sn-glycero-3-phospho-(1D-myo-inositol-4,5-bisphosphate) contacts are provided by residues Lys90, 178-179 (HH), and 427-431 (EEKQR).

The protein belongs to the OSBP family. Monomer. Homotetramer; phosphatidylinositol-4,5-bisphosphate binding promotes formation of stable tetramers. Interacts with DIAPH1. As to expression, widely expressed.

The protein localises to the cytoplasm. Its subcellular location is the cytosol. It localises to the lipid droplet. It is found in the cell membrane. In terms of biological role, intracellular transport protein that binds sterols and phospholipids and mediates lipid transport between intracellular compartments. Increases plasma membrane cholesterol levels and decreases phosphatidylinositol-4,5-bisphosphate levels in the cell membrane. Binds phosphoinositides, such as phosphatidylinositol-4,5-bisphosphate. Exhibits strong binding to phosphatidic acid and weak binding to phosphatidylinositol 3-phosphate. Binds cholesterol, dehydroergosterol, 22(R)-hydroxycholesterol and 25-hydroxycholesterol (in vitro). This Homo sapiens (Human) protein is Oxysterol-binding protein-related protein 2 (OSBPL2).